A 794-amino-acid chain; its full sequence is Furin (794 aa).

The signal sequence occupies residues 1-26 (MELRPWLLWVVAATGTLVLLAADAQG). Residues 27–107 (QKVFTNTWAV…QQVAKRRTKR (81 aa)) constitute a propeptide, inhibition peptide. At 108-715 (DVYQEPTDPK…AGLLPSHLPE (608 aa)) the chain is on the lumenal side. Asp115 is a binding site for Ca(2+). The 315-residue stretch at 121-435 (QWYLSGVTQR…YGLLDAGAMV (315 aa)) folds into the Peptidase S8 domain. The active-site Charge relay system is Asp153. Residue Asp154 participates in substrate binding. 4 residues coordinate Ca(2+): Asp162, Asp174, Asp179, and Asp181. The interval 162–183 (DLAGNYDPGASFDVNDQDPDPQ) is disordered. 191-192 (DN) contacts substrate. Residue His194 is the Charge relay system of the active site. Ca(2+) is bound by residues Val205, Asn208, Val210, and Gly212. 2 disulfide bridges follow: Cys211/Cys360 and Cys303/Cys333. Substrate-binding positions include Glu236, 253–258 (SWGPED), Asp264, and 292–295 (ASGN). Asp258 is a Ca(2+) binding site. Asp301 provides a ligand contact to Ca(2+). Substrate contacts are provided by Asp306 and Tyr308. Glu331 contacts Ca(2+). Ser368 acts as the Charge relay system in catalysis. Position 368 (Ser368) interacts with substrate. N-linked (GlcNAc...) asparagine glycosylation is found at Asn387 and Asn440. A P/Homo B domain is found at 444–576 (VAPQRKCIID…TLVLYGTAPE (133 aa)). Cys450 and Cys474 are oxidised to a cystine. The Cell attachment site motif lies at 498-500 (RGD). An N-linked (GlcNAc...) asparagine glycan is attached at Asn553. FU repeat units lie at residues 577–620 (GLPV…GFAP) and 638–681 (ASVC…QSQS). Residues 673–696 (QTCSRQSQSSRESPPQQQPPRLPP) are disordered. Residues 676-687 (SRQSQSSRESPP) show a composition bias toward low complexity. A helical transmembrane segment spans residues 716 to 738 (VVAGLSCAFIVLVFVTVFLVLQL). Over 739–794 (RSGFSFRGVKVYTMDRGLISYKGLPPEAWQEECPSDSEEDEGRGERTAFIKDQSAL) the chain is Cytoplasmic. Residues 759–762 (YKGL) form a cell surface signal region. Over residues 767–780 (WQEECPSDSEEDEG) the composition is skewed to acidic residues. The segment at 767–794 (WQEECPSDSEEDEGRGERTAFIKDQSAL) is disordered. Ser773 and Ser775 each carry phosphoserine; by CK2. The Trans Golgi network signal signature appears at 773-779 (SDSEEDE).

This sequence belongs to the peptidase S8 family. Furin subfamily. Interacts with FLNA. Binds to PACS1 which mediates TGN localization and connection to clathrin adapters. Interacts with LAMP1, LAMP2 and LAMP3. Requires Ca(2+) as cofactor. The inhibition peptide, which plays the role of an intramolecular chaperone, is autocatalytically removed in the endoplasmic reticulum (ER) and remains non-covalently bound to furin as a potent autoinhibitor. Following transport to the trans Golgi, a second cleavage within the inhibition propeptide results in propeptide dissociation and furin activation. Post-translationally, phosphorylation is required for TGN localization of the endoprotease. In vivo, exists as di-, mono- and non-phosphorylated forms. Seems to be expressed ubiquitously.

It localises to the golgi apparatus. The protein resides in the trans-Golgi network membrane. The protein localises to the cell membrane. Its subcellular location is the secreted. It is found in the endosome membrane. The enzyme catalyses Release of mature proteins from their proproteins by cleavage of -Arg-Xaa-Yaa-Arg-|-Zaa- bonds, where Xaa can be any amino acid and Yaa is Arg or Lys. Releases albumin, complement component C3 and von Willebrand factor from their respective precursors.. Inhibited by the not secondly cleaved propeptide. Inhibited by m-guanidinomethyl-phenylacetyl-Arg-Val-Arg-(amidomethyl)-benzamidine (m-guanidinomethyl-Phac-RVR-Amb) and 4-guanidinomethyl-phenylacetyl-Arg-Tle-Arg-4-amidinobenzylamide (MI-1148). Inhibited by Decanoyl-Arg-Val-Lys-Arg-chloromethylketone (decanoyl-RVKR-CMK). Inhibited by heparin/heparan sulfate-binding. Ubiquitous endoprotease within constitutive secretory pathways capable of cleavage at the RX(K/R)R consensus motif. Mediates processing of TGFB1, an essential step in TGF-beta-1 activation. Converts through proteolytic cleavage the non-functional Brain natriuretic factor prohormone into its active hormone BNP(1-32). By mediating processing of accessory subunit ATP6AP1/Ac45 of the V-ATPase, regulates the acidification of dense-core secretory granules in islets of Langerhans cells. In terms of biological role, (Microbial infection) Cleaves and activates diphtheria toxin DT. Functionally, (Microbial infection) Cleaves and activates anthrax toxin protective antigen (PA). Its function is as follows. (Microbial infection) Cleaves and activates HIV-1 virus Envelope glycoprotein gp160. (Microbial infection) Required for H7N1 and H5N1 influenza virus infection probably by cleaving hemagglutinin. In terms of biological role, (Microbial infection) Able to cleave S.pneumoniae serine-rich repeat protein PsrP. Functionally, (Microbial infection) Facilitates human coronaviruses EMC and SARS-CoV-2 infections by proteolytically cleaving the spike protein at the monobasic S1/S2 cleavage site. This cleavage is essential for spike protein-mediated cell-cell fusion and entry into human lung cells. Its function is as follows. (Microbial infection) Facilitates mumps virus infection by proteolytically cleaving the viral fusion protein F. This Homo sapiens (Human) protein is Furin.